The following is a 414-amino-acid chain: Transforming growth factor beta-2 proprotein (414 aa).

The signal sequence occupies residues M1–L19. 3 N-linked (GlcNAc...) asparagine glycosylation sites follow: N72, N140, and N241. Intrachain disulfides connect C309–C318, C317–C380, C346–C411, and C350–C413.

The protein belongs to the TGF-beta family. As to quaternary structure, interacts with the serine proteases, HTRA1 and HTRA3. Interacts with ASPN. Interacts with MFAP5. Interacts with Transforming growth factor beta-2 (TGF-beta-2) chain; interaction is non-covalent and maintains (TGF-beta-2) in a latent state. Interacts with LRRC32/GARP; leading to regulate activation of TGF-beta-2. Interacts with NREP; the interaction results in a decrease in TGFB2 autoinduction. In terms of assembly, transforming growth factor beta-2: Homodimer; disulfide-linked. Transforming growth factor beta-2: Interacts with TGF-beta receptors (TGFBR1 and TGFBR2), leading to signal transduction. The precursor proprotein is cleaved in the Golgi apparatus to form Transforming growth factor beta-2 (TGF-beta-2) and Latency-associated peptide (LAP) chains, which remain non-covalently linked, rendering TGF-beta-2 inactive.

It localises to the secreted. The protein localises to the extracellular space. Its subcellular location is the extracellular matrix. Its function is as follows. Precursor of the Latency-associated peptide (LAP) and Transforming growth factor beta-2 (TGF-beta-2) chains, which constitute the regulatory and active subunit of TGF-beta-2, respectively. In terms of biological role, required to maintain the Transforming growth factor beta-2 (TGF-beta-2) chain in a latent state during storage in extracellular matrix. Associates non-covalently with TGF-beta-2 and regulates its activation via interaction with 'milieu molecules', such as LTBP1 and LRRC32/GARP, that control activation of TGF-beta-2. Functionally, multifunctional protein that regulates various processes such as angiogenesis and heart development. Activation into mature form follows different steps: following cleavage of the proprotein in the Golgi apparatus, Latency-associated peptide (LAP) and Transforming growth factor beta-2 (TGF-beta-2) chains remain non-covalently linked rendering TGF-beta-2 inactive during storage in extracellular matrix. At the same time, LAP chain interacts with 'milieu molecules', such as LTBP1 and LRRC32/GARP, that control activation of TGF-beta-2 and maintain it in a latent state during storage in extracellular milieus. Once activated following release of LAP, TGF-beta-2 acts by binding to TGF-beta receptors (TGFBR1 and TGFBR2), which transduce signal. The protein is Transforming growth factor beta-2 proprotein (TGFB2) of Chlorocebus aethiops (Green monkey).